Reading from the N-terminus, the 286-residue chain is Pyridoxal kinase PdxY (286 aa).

Substrate-binding positions include Ser9 and Thr44–Gln45. ATP contacts are provided by residues Asp111, Ala143, Glu148, Lys181, and Arg208–Val211. Asp223 contacts substrate.

This sequence belongs to the pyridoxine kinase family. PdxY subfamily. As to quaternary structure, homodimer. Mg(2+) serves as cofactor.

It catalyses the reaction pyridoxal + ATP = pyridoxal 5'-phosphate + ADP + H(+). The protein operates within cofactor metabolism; pyridoxal 5'-phosphate salvage; pyridoxal 5'-phosphate from pyridoxal: step 1/1. In terms of biological role, pyridoxal kinase involved in the salvage pathway of pyridoxal 5'-phosphate (PLP). Catalyzes the phosphorylation of pyridoxal to PLP. The chain is Pyridoxal kinase PdxY from Yersinia pestis bv. Antiqua (strain Antiqua).